Here is a 430-residue protein sequence, read N- to C-terminus: GTPase Obg (430 aa).

The region spanning 1 to 158 (MFVDQVKISL…LDVSLELKLL (158 aa)) is the Obg domain. The interval 118–145 (KGGRGGRGNSRFATPRNPAPDFSEKGEP) is disordered. In terms of domain architecture, OBG-type G spans 159-329 (ADVGLVGFPS…LLYAIADKLE (171 aa)). Residues 165 to 172 (GFPSVGKS), 190 to 194 (FTTIK), 212 to 215 (DLPG), 282 to 285 (NKMD), and 310 to 312 (STI) each bind GTP. 2 residues coordinate Mg(2+): serine 172 and threonine 192. The 79-residue stretch at 352-430 (KHTPSQDKFT…ILGGEFEFVE (79 aa)) folds into the OCT domain.

It belongs to the TRAFAC class OBG-HflX-like GTPase superfamily. OBG GTPase family. In terms of assembly, monomer. Mg(2+) is required as a cofactor.

It is found in the cytoplasm. Its function is as follows. An essential GTPase which binds GTP, GDP and possibly (p)ppGpp with moderate affinity, with high nucleotide exchange rates and a fairly low GTP hydrolysis rate. Plays a role in control of the cell cycle, stress response, ribosome biogenesis and in those bacteria that undergo differentiation, in morphogenesis control. The sequence is that of GTPase Obg from Staphylococcus aureus (strain MRSA252).